A 177-amino-acid chain; its full sequence is Ribosome maturation factor RimP (177 aa).

Belongs to the RimP family.

It localises to the cytoplasm. In terms of biological role, required for maturation of 30S ribosomal subunits. The polypeptide is Ribosome maturation factor RimP (Streptococcus sanguinis (strain SK36)).